The following is a 431-amino-acid chain: Protein CLT2, chloroplastic (431 aa).

A chloroplast-targeting transit peptide spans 1–79; sequence MDTVLMATTP…PMRRPRFSVG (79 aa). Transmembrane regions (helical) follow at residues 99 to 119, 122 to 142, 163 to 183, 188 to 208, 212 to 232, 244 to 264, 284 to 304, 343 to 363, 365 to 385, and 403 to 423; these read VVIV…LVPM, YPFF…FTIL, FAII…AAAM, VIPI…LLIL, FLLN…VAVS, IGFL…GASI, IFVV…LLLP, ILPL…LHLV, ISSA…AVYI, and FTMG…PTTP.

It belongs to the CRT-like transporter family.

The protein localises to the plastid. Its subcellular location is the chloroplast membrane. Functionally, involved in thiol transport from the plastid to the cytosol. Transports probably both glutathione (GSH) and its precursor, gamma-glutamylcysteine (gamma-EC). This Arabidopsis thaliana (Mouse-ear cress) protein is Protein CLT2, chloroplastic.